The following is a 175-amino-acid chain: MVSVLVVGYKAFDLGIFGDKDQRLKIIKAAIRRDLIYLLENGMKWLVFTGNLGFEVWVLEVAKELQEEYNFQLATIFIFENQGENWNEANQEKLANFKNVDFIKYAYPSYENPSQFRTYNQFLLESTDGAYLFYDEENETKLKYLYRMMKENKQYHIKKLTFDDLNEMAENFSEI.

The protein belongs to the UPF0398 family.

The chain is UPF0398 protein SGO_0588 from Streptococcus gordonii (strain Challis / ATCC 35105 / BCRC 15272 / CH1 / DL1 / V288).